The primary structure comprises 209 residues: Probable GTP-binding protein EngB (209 aa).

Residues 23-198 enclose the EngB-type G domain; sequence NGAEIAFAGR…EKVVAGWLVP (176 aa). GTP is bound by residues 31–38, 58–62, 76–79, 143–146, and 177–179; these read GRSNAGKS, GRTQL, DLPG, TKSD, and FSS. Mg(2+) is bound by residues Ser-38 and Thr-60.

This sequence belongs to the TRAFAC class TrmE-Era-EngA-EngB-Septin-like GTPase superfamily. EngB GTPase family. Requires Mg(2+) as cofactor.

Necessary for normal cell division and for the maintenance of normal septation. The sequence is that of Probable GTP-binding protein EngB from Azoarcus sp. (strain BH72).